A 410-amino-acid chain; its full sequence is Phytoene synthase 1, chloroplastic (410 aa).

The transit peptide at 1–62 (MAIILVRAAS…EAGRPSPAVY (62 aa)) directs the protein to the chloroplast.

The protein belongs to the phytoene/squalene synthase family. In terms of assembly, monomer. As to expression, expressed in embryos, endosperm and seedling leaves. Expressed in leaves and endosperm.

Its subcellular location is the plastid. The protein resides in the chloroplast stroma. It catalyses the reaction 2 (2E,6E,10E)-geranylgeranyl diphosphate = 15-cis-phytoene + 2 diphosphate. It functions in the pathway carotenoid biosynthesis; phytoene biosynthesis; all-trans-phytoene from geranylgeranyl diphosphate: step 1/1. In terms of biological role, catalyzes the conversion of geranylgeranyl diphosphate to phytoene. Mediates the first committed step in carotenoid biosynthesis. In Zea mays (Maize), this protein is Phytoene synthase 1, chloroplastic.